We begin with the raw amino-acid sequence, 438 residues long: UDP-N-acetylmuramoylalanine--D-glutamate ligase (438 aa).

112 to 118 (GSNGKST) contacts ATP.

The protein belongs to the MurCDEF family.

The protein resides in the cytoplasm. The enzyme catalyses UDP-N-acetyl-alpha-D-muramoyl-L-alanine + D-glutamate + ATP = UDP-N-acetyl-alpha-D-muramoyl-L-alanyl-D-glutamate + ADP + phosphate + H(+). It participates in cell wall biogenesis; peptidoglycan biosynthesis. Cell wall formation. Catalyzes the addition of glutamate to the nucleotide precursor UDP-N-acetylmuramoyl-L-alanine (UMA). This Yersinia pseudotuberculosis serotype I (strain IP32953) protein is UDP-N-acetylmuramoylalanine--D-glutamate ligase.